We begin with the raw amino-acid sequence, 151 residues long: Small ribosomal subunit protein uS15 (151 aa).

The protein belongs to the universal ribosomal protein uS15 family. As to quaternary structure, component of the small ribosomal subunit.

Its subcellular location is the cytoplasm. Functionally, component of the small ribosomal subunit. The ribosome is a large ribonucleoprotein complex responsible for the synthesis of proteins in the cell. This Gillichthys mirabilis (Long-jawed mudsucker) protein is Small ribosomal subunit protein uS15 (rps13).